Here is a 55-residue protein sequence, read N- to C-terminus: Neurotoxin B-IV (55 aa).

Pro10 carries the hydroxyproline modification. 4 disulfides stabilise this stretch: Cys12/Cys52, Cys16/Cys48, Cys23/Cys41, and Cys26/Cys37.

The protein belongs to the worm B-toxin family.

Its subcellular location is the secreted. Its function is as follows. This toxin increases the excitability of nerves by delaying the inactivation of the voltage-gated sodium channel (Nav). Only acts on some crustacean. Is more abundant, but 15-fold less toxic than neurotoxin B-II. The protein is Neurotoxin B-IV of Cerebratulus lacteus (Milky ribbon worm).